The chain runs to 340 residues: Ferrochelatase (340 aa).

Fe cation is bound by residues His-189 and Glu-292.

It belongs to the ferrochelatase family.

The protein resides in the cytoplasm. It catalyses the reaction heme b + 2 H(+) = protoporphyrin IX + Fe(2+). Its pathway is porphyrin-containing compound metabolism; protoheme biosynthesis; protoheme from protoporphyrin-IX: step 1/1. In terms of biological role, catalyzes the ferrous insertion into protoporphyrin IX. This is Ferrochelatase from Pseudomonas aeruginosa (strain UCBPP-PA14).